The primary structure comprises 229 residues: Small ribosomal subunit protein uS3 (229 aa).

Residues 39–107 (VRKFLEKKLK…PAQINIAEIR (69 aa)) form the KH type-2 domain.

Belongs to the universal ribosomal protein uS3 family. Part of the 30S ribosomal subunit. Forms a tight complex with proteins S10 and S14.

Binds the lower part of the 30S subunit head. Binds mRNA in the 70S ribosome, positioning it for translation. This chain is Small ribosomal subunit protein uS3, found in Shewanella loihica (strain ATCC BAA-1088 / PV-4).